A 302-amino-acid chain; its full sequence is MKLSALKRCVMGSVRWAFQCGSWCPSQAEWLLCARCVQPEEKQRIGHFMFTRDAKAAMAGRLLMRKVIADKLQIPWDRILLERTGKGKPFLTGGSSSEYPCFNFNVSHQGDYAVLAAEPDRQVGVDIMKTDLPGSSSIEEFFRLMNRQFTEKEWNSIRSMNNDWARLDMFYRHWALKESFIKAIGVGLGFNLQRIEFEVSPVTMEIGKIYKETKMFLDDEEETWTFEEILLDNQHHVAIALGEVDHLQHQSPKIGDVAESTFTLLNFEDLMVSAIPMSDEDPDYWINFQSKQELPFRQRRSR.

Residues arginine 44, 83 to 88 (RTGKGK), and 105 to 108 (NVSH) contribute to the CoA site. Mg(2+)-binding residues include aspartate 126 and glutamate 178. 178–182 (ESFIK) provides a ligand contact to CoA.

It belongs to the P-Pant transferase superfamily. AcpS family. As to quaternary structure, monomer. Mg(2+) is required as a cofactor.

The protein resides in the cytoplasm. It localises to the cytosol. The catalysed reaction is apo-[ACP] + CoA = holo-[ACP] + adenosine 3',5'-bisphosphate + H(+). It carries out the reaction apo-[ACP] + acetyl-CoA = acetyl-[ACP] + adenosine 3',5'-bisphosphate + H(+). In terms of biological role, catalyzes the post-translational modification of target proteins by phosphopantetheine. Can transfer the 4'-phosphopantetheine moiety from coenzyme A, regardless of whether the CoA is presented in the free thiol form or as an acetyl thioester, to a serine residue of a broad range of acceptors. The sequence is that of L-aminoadipate-semialdehyde dehydrogenase-phosphopantetheinyl transferase (aasdhppt) from Xenopus laevis (African clawed frog).